We begin with the raw amino-acid sequence, 200 residues long: Methyl-coenzyme M reductase I operon protein C (200 aa).

As to quaternary structure, MCR is composed of three subunits: alpha, beta, and gamma. The function of proteins C and D is not known.

This Methanocaldococcus jannaschii (strain ATCC 43067 / DSM 2661 / JAL-1 / JCM 10045 / NBRC 100440) (Methanococcus jannaschii) protein is Methyl-coenzyme M reductase I operon protein C (mcrC).